Consider the following 552-residue polypeptide: MFCIQCEQTIRTPAGNGCSYSQGMCGKLAETSDLQDLLIYILQGVSAYAVKAREFNIIDAEIDTFVPKAFFATLTNVNFDDARLIEYVEQANTYRTRLKDAYEAQCAANGVMVAEMSAPAQLVLATAKPELLAQAPLAAPNRGDVHEDILGLRLLCLYGLKGAAAYMEHARVLDQTDAEVAGSFHEIMAFLGEDSVDVDKLFATSMEIGQLNYKVMAMLDEGETNAFGHPEPTQVNTVAVKGKAILVSGHDMVDLELILKQTEGKGINVFTHGEMLPALAYPEFKKYPHLVGNYGSAWQNQQKEFANFPGAVVMTSNCIIDPNVGNYSDRIFTRSIVGWPGVTHLVGDDFTQVIEKALALDGFIYDEIPHLITIGFARNALMAAAPAVIENVKNGSIKHFFLVGGCDGDKADRSYFTDIATQAPDDSLILTLGCGKYKFNKLEFGDINGIPRLLDIGQCNDSYSAIQLAIALSEAFECEINELPLSLVLSWFEQKAIVVLLTLLSLGVKNIRTGPTPPAFLTENLLNILEEKFGLRNTTTVEADLNTILNVA.

Positions 3, 6, 18, and 25 each coordinate [2Fe-2S] cluster. Hybrid [4Fe-2O-2S] cluster-binding residues include His-250, Glu-274, Cys-318, Cys-406, Cys-434, Cys-459, Glu-493, and Lys-495. Cys-406 bears the Cysteine persulfide mark.

This sequence belongs to the HCP family. [2Fe-2S] cluster serves as cofactor. Hybrid [4Fe-2O-2S] cluster is required as a cofactor.

Its subcellular location is the cytoplasm. It catalyses the reaction A + NH4(+) + H2O = hydroxylamine + AH2 + H(+). Functionally, catalyzes the reduction of hydroxylamine to form NH(3) and H(2)O. This is Hydroxylamine reductase from Shewanella woodyi (strain ATCC 51908 / MS32).